The chain runs to 90 residues: Bombyxin D-1 (90 aa).

A signal peptide spans 1–18 (MKLLGFFLSWVSVCAIVS). 3 disulfide bridges follow: Cys27-Cys77, Cys39-Cys90, and Cys76-Cys81. The propeptide at 48-68 (SVAHYAGYGWPLLPSLSEERG) is c peptide like.

Belongs to the insulin family. In terms of assembly, heterodimer of a B chain and an A chain linked by two disulfide bonds.

It localises to the secreted. In terms of biological role, brain peptide responsible for activation of prothoracic glands to produce ecdysone in insects. This is Bombyxin D-1 (BBXD1) from Bombyx mori (Silk moth).